The following is a 304-amino-acid chain: Putative HTH-type transcriptional regulatory protein Memar_2347 (304 aa).

Residues 132-189 (LREVRERFRMSLGDLASHLGVSRRTISKYESGMGTTLDVAIKLEEIFNAPLVETIELL) form the HTH cro/C1-type domain. The segment at residues 143-162 (LGDLASHLGVSRRTISKYES) is a DNA-binding region (H-T-H motif).

In Methanoculleus marisnigri (strain ATCC 35101 / DSM 1498 / JR1), this protein is Putative HTH-type transcriptional regulatory protein Memar_2347.